The sequence spans 347 residues: DNA-directed RNA polymerase subunit alpha (347 aa).

Residues 1–226 form an alpha N-terminal domain (alpha-NTD) region; it reads MLISQRPTLS…ELFGLARELN (226 aa). The interval 241–347 is alpha C-terminal domain (alpha-CTD); that stretch reads ADHIASFALP…DQDYAETEQL (107 aa).

Belongs to the RNA polymerase alpha chain family. Homodimer. The RNAP catalytic core consists of 2 alpha, 1 beta, 1 beta' and 1 omega subunit. When a sigma factor is associated with the core the holoenzyme is formed, which can initiate transcription.

The catalysed reaction is RNA(n) + a ribonucleoside 5'-triphosphate = RNA(n+1) + diphosphate. Its function is as follows. DNA-dependent RNA polymerase catalyzes the transcription of DNA into RNA using the four ribonucleoside triphosphates as substrates. This Mycobacterium avium (strain 104) protein is DNA-directed RNA polymerase subunit alpha.